The primary structure comprises 282 residues: Bifunctional protein FolD (282 aa).

NADP(+) contacts are provided by residues glycine 165–serine 167 and isoleucine 231.

It belongs to the tetrahydrofolate dehydrogenase/cyclohydrolase family. As to quaternary structure, homodimer.

The catalysed reaction is (6R)-5,10-methylene-5,6,7,8-tetrahydrofolate + NADP(+) = (6R)-5,10-methenyltetrahydrofolate + NADPH. The enzyme catalyses (6R)-5,10-methenyltetrahydrofolate + H2O = (6R)-10-formyltetrahydrofolate + H(+). The protein operates within one-carbon metabolism; tetrahydrofolate interconversion. Its function is as follows. Catalyzes the oxidation of 5,10-methylenetetrahydrofolate to 5,10-methenyltetrahydrofolate and then the hydrolysis of 5,10-methenyltetrahydrofolate to 10-formyltetrahydrofolate. The polypeptide is Bifunctional protein FolD (Francisella tularensis subsp. tularensis (strain FSC 198)).